Here is a 493-residue protein sequence, read N- to C-terminus: Poly(ribitol-phosphate) alpha-N-acetylglucosaminyltransferase (493 aa).

Residues glycine 17, lysine 59, histidine 249, arginine 326, lysine 331, threonine 383, and 403-411 (EGQGLSMIE) each bind UDP-N-acetyl-alpha-D-glucosamine.

This sequence belongs to the glycosyltransferase group 1 family. Homotrimer.

The protein resides in the cytoplasm. The catalysed reaction is 4-O-[(D-ribitylphospho)(n)-di{(2R)-glycerylphospho}]-N-acetyl-beta-D-mannosaminyl-(1-&gt;4)-N-acetyl-alpha-D-glucosaminyl di-trans,octa-cis-undecaprenyl diphosphate + n UDP-N-acetyl-alpha-D-glucosamine = 4-O-([2-N-acetyl-alpha-D-glucosaminyl-1-D-ribitylphospho](n)-di{[2R]-1-glycerylphospho})-N-acetyl-beta-D-mannosaminyl-(1-&gt;4)-N-acetyl-alpha-D-glucosaminyl di-trans,octa-cis-undecaprenyl diphosphate + n UDP + n H(+). The protein operates within cell wall biogenesis; poly(ribitol phosphate) teichoic acid biosynthesis. Functionally, attaches N-acetyl-alpha-D-glucosamine residues to poly(RboP)-wall teichoic acids (WTAs). The chain is Poly(ribitol-phosphate) alpha-N-acetylglucosaminyltransferase from Staphylococcus aureus (strain COL).